Reading from the N-terminus, the 414-residue chain is Ornithine aminotransferase (414 aa).

C154 and C163 are oxidised to a cystine. The residue at position 262 (K262) is an N6-(pyridoxal phosphate)lysine.

The protein belongs to the class-III pyridoxal-phosphate-dependent aminotransferase family. As to quaternary structure, homodimer. It depends on pyridoxal 5'-phosphate as a cofactor. Post-translationally, the disulfide bond between Cys-154 and Cys-163 is reduced by TRX1 which increases OAT catalytic activity.

The protein localises to the cytoplasm. The catalysed reaction is a 2-oxocarboxylate + L-ornithine = L-glutamate 5-semialdehyde + an L-alpha-amino acid. The enzyme catalyses L-ornithine + 2-oxoglutarate = L-glutamate 5-semialdehyde + L-glutamate. It participates in amino-acid biosynthesis; L-proline biosynthesis; L-glutamate 5-semialdehyde from L-ornithine: step 1/1. With respect to regulation, unlike for mammalian OATs, activity is increased by TRX1-mediated reduction of the disulfide bond between Cys-154 and Cys-163. Binding to TRX1 may also induce conformational changes that facilitate substrate binding. In terms of biological role, the enzyme has a very narrow substrate specificity and can only catalyze the transamination of alpha-ketoglutarate with ornithine or N-acetylornithine and, to a lesser extent, of glutamate-5-semialdehyde with glutamate and alanine. In Plasmodium falciparum (isolate 3D7), this protein is Ornithine aminotransferase.